The following is a 59-amino-acid chain: Bdellastasin (59 aa).

Intrachain disulfides connect Cys-10–Cys-21, Cys-15–Cys-26, Cys-28–Cys-48, Cys-33–Cys-52, and Cys-37–Cys-54. In terms of domain architecture, Antistasin-like spans 28–54 (CSDLHCKVKCEHGFKKDDNGCEYACIC).

Its subcellular location is the secreted. Its function is as follows. Strong inhibitor of mammalian trypsin, plasmin and acrosin. In Hirudo medicinalis (Medicinal leech), this protein is Bdellastasin.